The chain runs to 207 residues: Small ribosomal subunit protein uS4 (207 aa).

The tract at residues 33–54 (KLDSKPGQHGRTSGARTSDYGN) is disordered. Polar residues predominate over residues 42 to 53 (GRTSGARTSDYG). The S4 RNA-binding domain occupies 97–160 (SRLDNVVYRM…KKQVRIAEAL (64 aa)).

Belongs to the universal ribosomal protein uS4 family. As to quaternary structure, part of the 30S ribosomal subunit. Contacts protein S5. The interaction surface between S4 and S5 is involved in control of translational fidelity.

One of the primary rRNA binding proteins, it binds directly to 16S rRNA where it nucleates assembly of the body of the 30S subunit. Functionally, with S5 and S12 plays an important role in translational accuracy. The protein is Small ribosomal subunit protein uS4 of Cupriavidus pinatubonensis (strain JMP 134 / LMG 1197) (Cupriavidus necator (strain JMP 134)).